The following is a 256-amino-acid chain: Probable aquaporin TIP5-1 (256 aa).

Position 1 is an N-acetylmethionine (M1). Helical transmembrane passes span 24 to 44 (CYVSEFISTFFFVLAAVGSVM), 57 to 77 (PFGVLIPAIANALALSSSVYI), 89 to 109 (AVTFAMAVAGRISVPTAMFYW), 144 to 164 (FGASVLEGVLAFVLVYTVFTA), and 171 to 191 (LPLAVGPIFIGFVAGANVLAA). An NPA 1 motif is present at residues 87 to 89 (NPA). The short motif at 200–202 (NPA) is the NPA 2 element. The helical transmembrane segment at 222–242 (VGPLLGGATAALVYDNVVVPV) threads the bilayer. A Phosphoserine modification is found at S249.

Belongs to the MIP/aquaporin (TC 1.A.8) family. TIP (TC 1.A.8.10) subfamily.

It localises to the membrane. Functionally, potential aquaporin, which may facilitate the transport of water and small neutral solutes across cell membranes. The polypeptide is Probable aquaporin TIP5-1 (TIP5-1) (Arabidopsis thaliana (Mouse-ear cress)).